Consider the following 116-residue polypeptide: Ig heavy chain V region 3-6 (116 aa).

An N-terminal signal peptide occupies residues 1-18 (MKVLSLLYLLTAIPGILS). The framework-1 stretch occupies residues 19–48 (DVQLQESGPGLVKPSQSLSLTCSVTGYSIT). Residues cysteine 40 and cysteine 114 are joined by a disulfide bond. Residues 49–53 (SGYYW) form a complementarity-determining-1 region. The tract at residues 54-67 (NWIRQFPGNKLEWM) is framework-2. The complementarity-determining-2 stretch occupies residues 68–84 (GYISYDGSNNYNPSLKN). The tract at residues 85-116 (RISITRDTSKNQFFLKLNSVTTEDTATYYCAR) is framework-3.

The polypeptide is Ig heavy chain V region 3-6 (Ighv3-6) (Mus musculus (Mouse)).